The sequence spans 95 residues: PqqA binding protein (95 aa).

The protein belongs to the PqqD family. In terms of assembly, monomer. Interacts with PqqE.

The protein operates within cofactor biosynthesis; pyrroloquinoline quinone biosynthesis. Its function is as follows. Functions as a PqqA binding protein and presents PqqA to PqqE, in the pyrroloquinoline quinone (PQQ) biosynthetic pathway. The chain is PqqA binding protein from Rahnella aquatilis.